We begin with the raw amino-acid sequence, 83 residues long: Sec-independent protein translocase protein TatA (83 aa).

Residues 1-21 (MGSLSPWHWAILAVVVIVLFG) traverse the membrane as a helical segment. The segment at 48 to 83 (NENKAEASIETPTPVQSQRVDPSAASGQDSTEARPA) is disordered. Residues 57 to 77 (ETPTPVQSQRVDPSAASGQDS) show a composition bias toward polar residues.

The protein belongs to the TatA/E family. In terms of assembly, the Tat system comprises two distinct complexes: a TatABC complex, containing multiple copies of TatA, TatB and TatC subunits, and a separate TatA complex, containing only TatA subunits. Substrates initially bind to the TatABC complex, which probably triggers association of the separate TatA complex to form the active translocon.

Its subcellular location is the cell membrane. Part of the twin-arginine translocation (Tat) system that transports large folded proteins containing a characteristic twin-arginine motif in their signal peptide across membranes. TatA could form the protein-conducting channel of the Tat system. The sequence is that of Sec-independent protein translocase protein TatA from Mycobacterium bovis (strain BCG / Pasteur 1173P2).